An 85-amino-acid polypeptide reads, in one-letter code: Protein MC005 (85 aa).

Interacts with host IKBKG; this interaction prevents NF-kappa-B activation.

Its subcellular location is the host cytoplasm. Its function is as follows. Plays a role in the inhibition of the host NF-kappa-B pathway by preventing ubiquitin binding-dependent regulation of host IKBKB activation by IKBKG/NEMO. This chain is Protein MC005 (MC005L), found in Molluscum contagiosum virus subtype 1 (MOCV).